Reading from the N-terminus, the 367-residue chain is Glutamate 5-kinase (367 aa).

ATP is bound at residue lysine 17. Positions 57, 144, and 156 each coordinate substrate. Residues 176–177 (SD) and 217–223 (TGGMVSK) contribute to the ATP site. A PUA domain is found at 279-357 (VGSLTLDEGA…SELPCELRRP (79 aa)).

It belongs to the glutamate 5-kinase family.

The protein localises to the cytoplasm. It carries out the reaction L-glutamate + ATP = L-glutamyl 5-phosphate + ADP. Its pathway is amino-acid biosynthesis; L-proline biosynthesis; L-glutamate 5-semialdehyde from L-glutamate: step 1/2. Functionally, catalyzes the transfer of a phosphate group to glutamate to form L-glutamate 5-phosphate. The protein is Glutamate 5-kinase of Mycobacterium leprae (strain Br4923).